An 88-amino-acid polypeptide reads, in one-letter code: Small ribosomal subunit protein bS20 (88 aa).

Positions M1–L28 are disordered.

The protein belongs to the bacterial ribosomal protein bS20 family.

Functionally, binds directly to 16S ribosomal RNA. The chain is Small ribosomal subunit protein bS20 from Polynucleobacter necessarius subsp. necessarius (strain STIR1).